The following is a 104-amino-acid chain: Phosphoribosyl-ATP pyrophosphatase (104 aa).

The protein belongs to the PRA-PH family.

Its subcellular location is the cytoplasm. The enzyme catalyses 1-(5-phospho-beta-D-ribosyl)-ATP + H2O = 1-(5-phospho-beta-D-ribosyl)-5'-AMP + diphosphate + H(+). The protein operates within amino-acid biosynthesis; L-histidine biosynthesis; L-histidine from 5-phospho-alpha-D-ribose 1-diphosphate: step 2/9. This Nitrosococcus oceani (strain ATCC 19707 / BCRC 17464 / JCM 30415 / NCIMB 11848 / C-107) protein is Phosphoribosyl-ATP pyrophosphatase.